A 679-amino-acid chain; its full sequence is Protein polyglycylase TTLL10 (679 aa).

Over residues 1–15 (MPLHPPARRPHGHRR) the composition is skewed to basic residues. 3 disordered regions span residues 1 to 33 (MPLHPPARRPHGHRRNGSEAQTEATTQDTGRLS), 49 to 77 (GHRAARRPRRGVGTTSASRAPRPGALMPA), and 96 to 124 (VSFKRPKRSRTHQSHTKVPGWTHEKRMGS). Positions 18–30 (SEAQTEATTQDTG) are enriched in polar residues. A compositionally biased stretch (basic residues) spans 96–110 (VSFKRPKRSRTHQSH). The 372-residue stretch at 172-543 (QGPFFYIGGT…TCQKSLHSQK (372 aa)) folds into the TTL domain. ATP is bound by residues Lys304, 310–311 (QG), 353–356 (QRYV), 366–368 (KFD), and 409–410 (TN). Position 310 (Gln310) interacts with a protein. 3 residues coordinate Mg(2+): Asp489, Glu502, and Asn504. Residues 605 to 679 (DRPAARKSMS…EQRSTSHRGS (75 aa)) are disordered.

Mg(2+) is required as a cofactor.

It localises to the cytoplasm. Its subcellular location is the cytoskeleton. The protein resides in the cell projection. The protein localises to the cilium. It is found in the cilium axoneme. The catalysed reaction is (glycyl)(n)-glycyl-L-glutamyl-[protein] + glycine + ATP = (glycyl)(n+1)-glycyl-L-glutamyl-[protein] + ADP + phosphate + H(+). Its function is as follows. Polyglycylase which modifies both tubulin and non-tubulin proteins, generating polyglycine side chains of variable lengths on the gamma-carboxyl groups of specific glutamate residues of target proteins. Involved in the elongation step rather than the initiation step of the polyglycylation reaction. Polyglycylates alpha-tubulin and beta-tubulin. Polyglycylates non-tubulin proteins such as nucleosome assembly protein NAP1. The protein is Protein polyglycylase TTLL10 of Rattus norvegicus (Rat).